We begin with the raw amino-acid sequence, 85 residues long: MKLLLLLIVSASMLIESLVNADGYIKRRDGCKVACLIGNEGCDKECKAYGGSYGYCWTWGLACWCEGLPDDKTWKSETNTCGGKK.

A signal peptide spans 1-21 (MKLLLLLIVSASMLIESLVNA). Positions 22-82 (DGYIKRRDGC…TWKSETNTCG (61 aa)) constitute an LCN-type CS-alpha/beta domain. 4 disulfide bridges follow: Cys31/Cys81, Cys35/Cys56, Cys42/Cys63, and Cys46/Cys65. At Gly82 the chain carries Glycine amide.

Belongs to the long (4 C-C) scorpion toxin superfamily. Sodium channel inhibitor family. Beta subfamily. As to expression, expressed by the venom gland.

It localises to the secreted. In terms of biological role, depressant insect beta-toxins cause a transient contraction paralysis followed by a slow flaccid paralysis. They bind voltage-independently at site-4 of sodium channels (Nav) and shift the voltage of activation toward more negative potentials thereby affecting sodium channel activation and promoting spontaneous and repetitive firing. This toxin is active only on insects. The sequence is that of Beta-insect depressant toxin LqhIT2 from Leiurus hebraeus (Hebrew deathstalker scorpion).